The chain runs to 542 residues: MSILALVEDRPTPKEVYNWRIYLLAAVASFTSCMIGYDSAFIGTTLALSSFREEFGFNTMSKTAVNLVSANIVSCYQAGAFFGAFLAYPVGHFWGRKWGLLFSGAIFTLGAGLMLGADGDRGLGLLYGGRVLAGLGVGAGSNITPIYISEMAPPSIRGRLVGVYELGWQIGGLVGFWINYGVSETLAPSHKQWIIPFAVQLIPSGLLLIGAVFLKESPRWLFSRGRREDAIKNLCWIRQLPADHIYMIEEIGAVDQALEEQRATIGLGFWKPFKAAGTNKKVMYRLFLGSMLFFWQNGSGINAINYYSPTVFKSIGLQGANTSMFSTGIFGVVKTVVTFVWLLYLIDRLGRRLLLLIGAAGASVCLFIVGAYIKIADPASNPTQEMTGGGIAAMFFFYLYTVFYTPSWNGTPWVMNSEMFEPNMRSLAQACAAASNWFWNFLISRFTPQMFAKMEYGVWFFFASLMVLSIVFVFFLLPETKGIPLESMDALFESRPIWRAHETVLARLREDEERFRHDIEESGYSKTGDQQVEHLSEDLPKV.

Topologically, residues 1–22 (MSILALVEDRPTPKEVYNWRIY) are cytoplasmic. Residues 23–43 (LLAAVASFTSCMIGYDSAFIG) traverse the membrane as a helical segment. Topologically, residues 44 to 66 (TTLALSSFREEFGFNTMSKTAVN) are extracellular. A helical transmembrane segment spans residues 67–87 (LVSANIVSCYQAGAFFGAFLA). Topologically, residues 88 to 97 (YPVGHFWGRK) are cytoplasmic. A helical transmembrane segment spans residues 98 to 118 (WGLLFSGAIFTLGAGLMLGAD). Topologically, residues 119–130 (GDRGLGLLYGGR) are extracellular. The helical transmembrane segment at 131-151 (VLAGLGVGAGSNITPIYISEM) threads the bilayer. Topologically, residues 152-159 (APPSIRGR) are cytoplasmic. The chain crosses the membrane as a helical span at residues 160-180 (LVGVYELGWQIGGLVGFWINY). At 181 to 193 (GVSETLAPSHKQW) the chain is on the extracellular side. A helical transmembrane segment spans residues 194–214 (IIPFAVQLIPSGLLLIGAVFL). Residues 215–285 (KESPRWLFSR…AGTNKKVMYR (71 aa)) lie on the Cytoplasmic side of the membrane. A helical transmembrane segment spans residues 286 to 306 (LFLGSMLFFWQNGSGINAINY). At 307–325 (YSPTVFKSIGLQGANTSMF) the chain is on the extracellular side. Residues 326–346 (STGIFGVVKTVVTFVWLLYLI) traverse the membrane as a helical segment. Residues 347–352 (DRLGRR) are Cytoplasmic-facing. Residues 353–373 (LLLLIGAAGASVCLFIVGAYI) form a helical membrane-spanning segment. Residues 374–387 (KIADPASNPTQEMT) lie on the Extracellular side of the membrane. A helical transmembrane segment spans residues 388 to 408 (GGGIAAMFFFYLYTVFYTPSW). Over 409–456 (NGTPWVMNSEMFEPNMRSLAQACAAASNWFWNFLISRFTPQMFAKMEY) the chain is Cytoplasmic. The helical transmembrane segment at 457 to 477 (GVWFFFASLMVLSIVFVFFLL) threads the bilayer. Residues 478–542 (PETKGIPLES…EHLSEDLPKV (65 aa)) are Extracellular-facing. The tract at residues 519 to 542 (IEESGYSKTGDQQVEHLSEDLPKV) is disordered. Positions 531–542 (QVEHLSEDLPKV) are enriched in basic and acidic residues.

This sequence belongs to the major facilitator superfamily. Sugar transporter (TC 2.A.1.1) family. In terms of assembly, interacts with creB. Post-translationally, ubiquitinated. Deubiquitinated by creB, probably to control its activity or amount.

It localises to the cell membrane. Functionally, integral membrane transporter that imports quinic acid to be catabolized as a carbon source. The sequence is that of Probable quinate permease (qutD) from Neosartorya fischeri (strain ATCC 1020 / DSM 3700 / CBS 544.65 / FGSC A1164 / JCM 1740 / NRRL 181 / WB 181) (Aspergillus fischerianus).